The sequence spans 643 residues: uncharacterized protein (643 aa).

The span at 179-199 (FKSSQLQQSPSPNKKSPSYSQ) shows a compositional bias: low complexity. 2 disordered regions span residues 179–200 (FKSSQLQQSPSPNKKSPSYSQV) and 349–377 (KRSNSIDRAGIRSRRRSHSSPERSTSTEN).

This is an uncharacterized protein from Caenorhabditis elegans.